The following is a 338-amino-acid chain: Probable dual-specificity RNA methyltransferase RlmN (338 aa).

The active-site Proton acceptor is the E89. The region spanning 95 to 325 (HNYGMSACVT…AILRKEQGHD (231 aa)) is the Radical SAM core domain. Residues C102 and C330 are joined by a disulfide bond. Residues C109, C113, and C116 each coordinate [4Fe-4S] cluster. Residues 156 to 157 (GE), S188, 211 to 213 (SLH), and N287 each bind S-adenosyl-L-methionine. The active-site S-methylcysteine intermediate is C330.

This sequence belongs to the radical SAM superfamily. RlmN family. Requires [4Fe-4S] cluster as cofactor.

The protein localises to the cytoplasm. The enzyme catalyses adenosine(2503) in 23S rRNA + 2 reduced [2Fe-2S]-[ferredoxin] + 2 S-adenosyl-L-methionine = 2-methyladenosine(2503) in 23S rRNA + 5'-deoxyadenosine + L-methionine + 2 oxidized [2Fe-2S]-[ferredoxin] + S-adenosyl-L-homocysteine. It carries out the reaction adenosine(37) in tRNA + 2 reduced [2Fe-2S]-[ferredoxin] + 2 S-adenosyl-L-methionine = 2-methyladenosine(37) in tRNA + 5'-deoxyadenosine + L-methionine + 2 oxidized [2Fe-2S]-[ferredoxin] + S-adenosyl-L-homocysteine. Functionally, specifically methylates position 2 of adenine 2503 in 23S rRNA and position 2 of adenine 37 in tRNAs. This chain is Probable dual-specificity RNA methyltransferase RlmN, found in Acholeplasma laidlawii (strain PG-8A).